A 1427-amino-acid chain; its full sequence is DNA-directed RNA polymerase subunit beta' (1427 aa).

Positions 70, 72, 85, and 88 each coordinate Zn(2+). Residues Asp461, Asp463, and Asp465 each coordinate Mg(2+). Positions 809, 882, 889, and 892 each coordinate Zn(2+). The tract at residues 1394–1427 is disordered; that stretch reads EAAIGDDPLGKVQGEDFTTDDVMVEERPEGASEE. Over residues 1417 to 1427 the composition is skewed to basic and acidic residues; the sequence is VEERPEGASEE.

It belongs to the RNA polymerase beta' chain family. The RNAP catalytic core consists of 2 alpha, 1 beta, 1 beta' and 1 omega subunit. When a sigma factor is associated with the core the holoenzyme is formed, which can initiate transcription. Mg(2+) serves as cofactor. Zn(2+) is required as a cofactor.

The catalysed reaction is RNA(n) + a ribonucleoside 5'-triphosphate = RNA(n+1) + diphosphate. Functionally, DNA-dependent RNA polymerase catalyzes the transcription of DNA into RNA using the four ribonucleoside triphosphates as substrates. The protein is DNA-directed RNA polymerase subunit beta' of Sphingopyxis alaskensis (strain DSM 13593 / LMG 18877 / RB2256) (Sphingomonas alaskensis).